The primary structure comprises 148 residues: MIDKKELREISLKKKREKRLTWEEIGKYLGRDKVYAAMLLYGYAQATEEEADKIITLLDLPKELKPAFLDAPMRTPAQPWPPTDPFIYRLYEGVLLYGPVIKDVAHELFGDGIMSMIDVKIYVDKVIENNYPRMVLTFNGKWLYYSKW.

Catalysis depends on residues Arg89, Glu92, and Ser115.

It belongs to the cyanase family.

The enzyme catalyses cyanate + hydrogencarbonate + 3 H(+) = NH4(+) + 2 CO2. Functionally, catalyzes the reaction of cyanate with bicarbonate to produce ammonia and carbon dioxide. The polypeptide is Cyanate hydratase (Sulfurisphaera tokodaii (strain DSM 16993 / JCM 10545 / NBRC 100140 / 7) (Sulfolobus tokodaii)).